A 194-amino-acid chain; its full sequence is Imidazoleglycerol-phosphate dehydratase (194 aa).

Belongs to the imidazoleglycerol-phosphate dehydratase family.

Its subcellular location is the cytoplasm. The enzyme catalyses D-erythro-1-(imidazol-4-yl)glycerol 3-phosphate = 3-(imidazol-4-yl)-2-oxopropyl phosphate + H2O. It participates in amino-acid biosynthesis; L-histidine biosynthesis; L-histidine from 5-phospho-alpha-D-ribose 1-diphosphate: step 6/9. This Listeria monocytogenes serovar 1/2a (strain ATCC BAA-679 / EGD-e) protein is Imidazoleglycerol-phosphate dehydratase.